The chain runs to 520 residues: Zinc finger and BTB domain-containing protein 18 (520 aa).

Positions 24-91 constitute a BTB domain; sequence CDCTVLVGDA…MYEGILQFKG (68 aa). The interval 121–140 is disordered; the sequence is ATTDSTKKEEDTSSFSDKVE. 4 C2H2-type zinc fingers span residues 368–390, 408–430, 436–458, and 464–487; these read FMCP…LSTH, PTCS…ERTH, YTCT…AVVH, and HACK…RKFH.

This sequence belongs to the krueppel C2H2-type zinc-finger protein family. ZBTB18 subfamily.

The protein resides in the nucleus. In terms of biological role, transcriptional repressor that plays a role in various developmental processes. Specifically binds the consensus DNA sequence 5'-[AC]ACATCTG[GT][AC]-3' which contains the E box core, and acts by recruiting chromatin remodeling multiprotein complexes. The polypeptide is Zinc finger and BTB domain-containing protein 18 (zbtb18) (Xenopus laevis (African clawed frog)).